The primary structure comprises 658 residues: Probable rhamnogalacturonate lyase B (658 aa).

An N-terminal signal peptide occupies residues 1-19 (MRFAIPLGAACAWAGVALA). 8 N-linked (GlcNAc...) asparagine glycosylation sites follow: Asn110, Asn143, Asn239, Asn280, Asn522, Asn530, Asn592, and Asn633.

Belongs to the polysaccharide lyase 4 family.

It is found in the secreted. The catalysed reaction is Endotype eliminative cleavage of L-alpha-rhamnopyranosyl-(1-&gt;4)-alpha-D-galactopyranosyluronic acid bonds of rhamnogalacturonan I domains in ramified hairy regions of pectin leaving L-rhamnopyranose at the reducing end and 4-deoxy-4,5-unsaturated D-galactopyranosyluronic acid at the non-reducing end.. Pectinolytic enzymes consist of four classes of enzymes: pectin lyase, polygalacturonase, pectin methylesterase and rhamnogalacturonase. Degrades the rhamnogalacturonan I (RG-I) backbone of pectin. The sequence is that of Probable rhamnogalacturonate lyase B (rglB) from Aspergillus fumigatus (strain CBS 144.89 / FGSC A1163 / CEA10) (Neosartorya fumigata).